A 573-amino-acid chain; its full sequence is 2-succinyl-5-enolpyruvyl-6-hydroxy-3-cyclohexene-1-carboxylate synthase (573 aa).

This sequence belongs to the TPP enzyme family. MenD subfamily. As to quaternary structure, homodimer. It depends on Mg(2+) as a cofactor. The cofactor is Mn(2+). Thiamine diphosphate serves as cofactor.

The enzyme catalyses isochorismate + 2-oxoglutarate + H(+) = 5-enolpyruvoyl-6-hydroxy-2-succinyl-cyclohex-3-ene-1-carboxylate + CO2. It participates in quinol/quinone metabolism; 1,4-dihydroxy-2-naphthoate biosynthesis; 1,4-dihydroxy-2-naphthoate from chorismate: step 2/7. It functions in the pathway quinol/quinone metabolism; menaquinone biosynthesis. Its function is as follows. Catalyzes the thiamine diphosphate-dependent decarboxylation of 2-oxoglutarate and the subsequent addition of the resulting succinic semialdehyde-thiamine pyrophosphate anion to isochorismate to yield 2-succinyl-5-enolpyruvyl-6-hydroxy-3-cyclohexene-1-carboxylate (SEPHCHC). The sequence is that of 2-succinyl-5-enolpyruvyl-6-hydroxy-3-cyclohexene-1-carboxylate synthase from Shewanella sp. (strain MR-4).